Here is a 598-residue protein sequence, read N- to C-terminus: Autophagy-related protein 22-1 (598 aa).

The tract at residues 1-20 is disordered; it reads MEDGGAGLRAPRYPAEDTSP. Residues 28-48 traverse the membrane as a helical segment; it reads GFFCYGLAAEVFAVCAVGSFL. Asn74 and Asn80 each carry an N-linked (GlcNAc...) asparagine glycan. The next 3 membrane-spanning stretches (helical) occupy residues 111-131, 159-179, and 182-202; these read SFAM…LVSV, FLLV…ICVV, and GCSF…HPVV. Positions 207-238 are disordered; that stretch reads DHPTASSSIPLQPISPQRSSRKSEESLHQVNR. Low complexity predominate over residues 212–224; it reads SSSIPLQPISPQR. Residues 227–238 show a composition bias toward basic and acidic residues; the sequence is RKSEESLHQVNR. The helical transmembrane segment at 263–283 threads the bilayer; that stretch reads VGIGYMAAVSVQVICILILYI. Asn285 carries N-linked (GlcNAc...) asparagine glycosylation. Transmembrane regions (helical) follow at residues 297–317, 363–383, 400–420, 431–451, 465–485, 489–509, and 534–554; these read TVLF…VMWL, VLLF…ISAT, ALLS…WPII, IIVC…LGFL, WYEI…LSSY, FYGL…FAIT, and AFGF…MVDV. The disordered stretch occupies residues 575–598; that stretch reads HEDFESFEGSSDGHEAEGLMRDHD. Residues 585-598 show a composition bias toward basic and acidic residues; it reads SDGHEAEGLMRDHD.

Belongs to the ATG22 family.

It is found in the vacuole membrane. Vacuolar effluxer which mediate the efflux of amino acids resulting from autophagic degradation. The release of autophagic amino acids allows the maintenance of protein synthesis and viability during nitrogen starvation. The sequence is that of Autophagy-related protein 22-1 (atg22-1) from Sclerotinia sclerotiorum (strain ATCC 18683 / 1980 / Ss-1) (White mold).